The primary structure comprises 304 residues: Protease HtpX homolog (304 aa).

A run of 2 helical transmembrane segments spans residues isoleucine 14 to isoleucine 34 and tyrosine 39 to methionine 59. Histidine 144 serves as a coordination point for Zn(2+). The active site involves glutamate 145. Histidine 148 serves as a coordination point for Zn(2+). Transmembrane regions (helical) follow at residues isoleucine 159–phenylalanine 179 and alanine 202–isoleucine 222. Glutamate 231 is a Zn(2+) binding site.

It belongs to the peptidase M48B family. Zn(2+) is required as a cofactor.

It localises to the cell membrane. The chain is Protease HtpX homolog from Listeria monocytogenes serotype 4b (strain CLIP80459).